The primary structure comprises 447 residues: Tubulin beta chain (447 aa).

Residues glutamine 11, glutamate 69, serine 138, glycine 142, threonine 143, glycine 144, asparagine 204, and asparagine 226 each contribute to the GTP site. Glutamate 69 provides a ligand contact to Mg(2+). The interval 425-447 is disordered; sequence YQEASISEGEEEYDEEAPLEAEE. Residues 432-447 are compositionally biased toward acidic residues; sequence EGEEEYDEEAPLEAEE.

Belongs to the tubulin family. Dimer of alpha and beta chains. A typical microtubule is a hollow water-filled tube with an outer diameter of 25 nm and an inner diameter of 15 nM. Alpha-beta heterodimers associate head-to-tail to form protofilaments running lengthwise along the microtubule wall with the beta-tubulin subunit facing the microtubule plus end conferring a structural polarity. Microtubules usually have 13 protofilaments but different protofilament numbers can be found in some organisms and specialized cells. It depends on Mg(2+) as a cofactor.

It is found in the cytoplasm. Its subcellular location is the cytoskeleton. Tubulin is the major constituent of microtubules, a cylinder consisting of laterally associated linear protofilaments composed of alpha- and beta-tubulin heterodimers. Microtubules grow by the addition of GTP-tubulin dimers to the microtubule end, where a stabilizing cap forms. Below the cap, tubulin dimers are in GDP-bound state, owing to GTPase activity of alpha-tubulin. This chain is Tubulin beta chain (tubB), found in Phaeosphaeria nodorum (strain SN15 / ATCC MYA-4574 / FGSC 10173) (Glume blotch fungus).